The primary structure comprises 1015 residues: Putative ankyrin repeat protein R96 (1015 aa).

A compositionally biased stretch (basic residues) spans 1-14 (MSTVKKSSKKKSSK). A disordered region spans residues 1 to 37 (MSTVKKSSKKKSSKKSSSGNESSKKSSPKIVPKHTAK). 8 ANK repeats span residues 136–165 (NGHK…NIDF), 168–201 (APSN…AVNI), 202–231 (DGRS…DVEV), 340–370 (LGHN…DFQA), 374–403 (NITN…KIVS), 456–485 (SGYR…TIFA), 498–527 (NNND…QFQL), and 535–564 (TVPT…ITDC).

This is Putative ankyrin repeat protein R96 from Acanthamoeba polyphaga mimivirus (APMV).